A 165-amino-acid polypeptide reads, in one-letter code: Glucosamine 6-phosphate N-acetyltransferase (165 aa).

The 144-residue stretch at 22 to 165 (FKVRPLAKDD…DDCNFMTQRF (144 aa)) folds into the N-acetyltransferase domain. Substrate-binding positions include Thr-44, 92–95 (KFIH), and 104–106 (EDV). Residue 114–119 (RQKLGA) participates in acetyl-CoA binding. Residues 135–136 (YK) and Arg-164 contribute to the substrate site.

Belongs to the acetyltransferase family. GNA1 subfamily.

The enzyme catalyses D-glucosamine 6-phosphate + acetyl-CoA = N-acetyl-D-glucosamine 6-phosphate + CoA + H(+). The protein operates within nucleotide-sugar biosynthesis; UDP-N-acetyl-alpha-D-glucosamine biosynthesis; N-acetyl-alpha-D-glucosamine 1-phosphate from alpha-D-glucosamine 6-phosphate (route I): step 1/2. The polypeptide is Glucosamine 6-phosphate N-acetyltransferase (gna-1) (Caenorhabditis elegans).